Reading from the N-terminus, the 203-residue chain is Auxin-responsive protein IAA4 (203 aa).

The segment at 1–31 (MEECKGGGMSPSSSMDSSTHPALSTTSSAAT) is disordered. Over residues 10 to 31 (SPSSSMDSSTHPALSTTSSAAT) the composition is skewed to low complexity. Positions 40 to 44 (LRLGL) match the EAR-like (transcriptional repression) motif. The region spanning 108–202 (TLFVKVYMEG…KKLRIARMDK (95 aa)) is the PB1 domain.

Belongs to the Aux/IAA family. In terms of assembly, homodimers and heterodimers.

It is found in the nucleus. In terms of biological role, aux/IAA proteins are short-lived transcriptional factors that function as repressors of early auxin response genes at low auxin concentrations. This Oryza sativa subsp. japonica (Rice) protein is Auxin-responsive protein IAA4 (IAA4).